The sequence spans 209 residues: Uracil phosphoribosyltransferase (209 aa).

5-phospho-alpha-D-ribose 1-diphosphate is bound by residues R77, R102, and 129 to 137; that span reads DPMLATGSS. Residues I192 and 197-199 contribute to the uracil site; that span reads GDA. A 5-phospho-alpha-D-ribose 1-diphosphate-binding site is contributed by D198.

This sequence belongs to the UPRTase family. Mg(2+) is required as a cofactor.

It catalyses the reaction UMP + diphosphate = 5-phospho-alpha-D-ribose 1-diphosphate + uracil. Its pathway is pyrimidine metabolism; UMP biosynthesis via salvage pathway; UMP from uracil: step 1/1. Allosterically activated by GTP. Catalyzes the conversion of uracil and 5-phospho-alpha-D-ribose 1-diphosphate (PRPP) to UMP and diphosphate. This chain is Uracil phosphoribosyltransferase, found in Metamycoplasma hominis (Mycoplasma hominis).